A 447-amino-acid chain; its full sequence is ATP-dependent protease ATPase subunit HslU (447 aa).

ATP contacts are provided by residues Ile-18, 60–65 (GVGKTE), Asp-259, Glu-325, and Arg-397.

The protein belongs to the ClpX chaperone family. HslU subfamily. A double ring-shaped homohexamer of HslV is capped on each side by a ring-shaped HslU homohexamer. The assembly of the HslU/HslV complex is dependent on binding of ATP.

The protein localises to the cytoplasm. In terms of biological role, ATPase subunit of a proteasome-like degradation complex; this subunit has chaperone activity. The binding of ATP and its subsequent hydrolysis by HslU are essential for unfolding of protein substrates subsequently hydrolyzed by HslV. HslU recognizes the N-terminal part of its protein substrates and unfolds these before they are guided to HslV for hydrolysis. This chain is ATP-dependent protease ATPase subunit HslU, found in Burkholderia lata (strain ATCC 17760 / DSM 23089 / LMG 22485 / NCIMB 9086 / R18194 / 383).